A 325-amino-acid chain; its full sequence is Zinc-type alcohol dehydrogenase-like protein C337.11 (325 aa).

This sequence belongs to the zinc-containing alcohol dehydrogenase family. Quinone oxidoreductase subfamily.

Its subcellular location is the cytoplasm. The protein resides in the nucleus. This Schizosaccharomyces pombe (strain 972 / ATCC 24843) (Fission yeast) protein is Zinc-type alcohol dehydrogenase-like protein C337.11.